A 147-amino-acid chain; its full sequence is Protein-export protein SecB (147 aa).

The protein belongs to the SecB family. Homotetramer, a dimer of dimers. One homotetramer interacts with 1 SecA dimer.

Its subcellular location is the cytoplasm. Functionally, one of the proteins required for the normal export of preproteins out of the cell cytoplasm. It is a molecular chaperone that binds to a subset of precursor proteins, maintaining them in a translocation-competent state. It also specifically binds to its receptor SecA. The chain is Protein-export protein SecB from Neisseria meningitidis serogroup C (strain 053442).